A 117-amino-acid chain; its full sequence is Large ribosomal subunit protein uL18 (117 aa).

It belongs to the universal ribosomal protein uL18 family. Part of the 50S ribosomal subunit; part of the 5S rRNA/L5/L18/L25 subcomplex. Contacts the 5S and 23S rRNAs.

This is one of the proteins that bind and probably mediate the attachment of the 5S RNA into the large ribosomal subunit, where it forms part of the central protuberance. In Aeromonas salmonicida (strain A449), this protein is Large ribosomal subunit protein uL18.